Here is a 386-residue protein sequence, read N- to C-terminus: Agamous-like MADS-box protein AGL103 (386 aa).

One can recognise an MADS-box domain in the interval 29 to 76 (SSSRATSLIKRQQTVFKKAKELSILCDIDVCVICYGSNGELKTWPEER).

In terms of assembly, interacts with MEE14/CBP1.

The protein localises to the nucleus. In terms of biological role, probable transcription factor that may function in the maintenance of the proper function of the central cell in pollen tube attraction. The protein is Agamous-like MADS-box protein AGL103 of Arabidopsis thaliana (Mouse-ear cress).